Reading from the N-terminus, the 234-residue chain is Phosphoribosylaminoimidazole-succinocarboxamide synthase (234 aa).

The protein belongs to the SAICAR synthetase family.

The enzyme catalyses 5-amino-1-(5-phospho-D-ribosyl)imidazole-4-carboxylate + L-aspartate + ATP = (2S)-2-[5-amino-1-(5-phospho-beta-D-ribosyl)imidazole-4-carboxamido]succinate + ADP + phosphate + 2 H(+). The protein operates within purine metabolism; IMP biosynthesis via de novo pathway; 5-amino-1-(5-phospho-D-ribosyl)imidazole-4-carboxamide from 5-amino-1-(5-phospho-D-ribosyl)imidazole-4-carboxylate: step 1/2. This chain is Phosphoribosylaminoimidazole-succinocarboxamide synthase, found in Staphylococcus aureus (strain MRSA252).